The following is a 397-amino-acid chain: Cercosporin biosynthesis regulatory protein CTB8 (397 aa).

The segment at residues 26 to 53 (CTHCSSQKIRCTKERPACARCVNKGLLC) is a DNA-binding region (zn(2)-C6 fungal-type). 2 disordered regions span residues 63–90 (TRRH…APDS) and 173–198 (AEAS…ATTH). The segment covering 74–87 (PETTISNAPTSSVA) has biased composition (polar residues). The segment covering 179–197 (PSSSSSPPSQRSDGGRATT) has biased composition (low complexity).

The protein resides in the nucleus. Its function is as follows. Transcription regulator of the gene cluster that mediates the biosynthesis of cercosporin, a light-activated, non-host-selective toxin. The perylenequinone chromophore of cercosporin absorbs light energy to attain an electronically-activated triplet state and produces active oxygen species such as the hydroxyl radical, superoxide, hydrogen peroxide or singlet oxygen upon reaction with oxygen molecules. These reactive oxygen species cause damage to various cellular components including lipids, proteins and nucleic acids. In Cercospora beticola (Sugarbeet leaf spot fungus), this protein is Cercosporin biosynthesis regulatory protein CTB8.